The primary structure comprises 308 residues: Zinc finger protein unc-98 (308 aa).

2 consecutive C2H2-type zinc fingers follow at residues Tyr111–His133 and Tyr139–His161. Residues Gly166–His186 form a C2H2-type 3; degenerate zinc finger. Residues Tyr244–His266 form a C2H2-type 4 zinc finger.

The protein localises to the nucleus. It is found in the cytoplasm. Its function is as follows. Probable transcription factor. Required for muscle structure. Its dual subcellular localization suggests that it may function both as a muscle adhesion complex protein and as a transcription factor, or work together with transcription factors, to influence gene expression. Thought to act as a molecular bridge between unc-97 and mhc-a at the M-line of muscles, possibly in a signaling role. In Caenorhabditis briggsae, this protein is Zinc finger protein unc-98.